A 202-amino-acid chain; its full sequence is Glycerol-3-phosphate acyltransferase (202 aa).

5 helical membrane-spanning segments follow: residues 3-23 (NLII…LILA), 87-107 (LLWS…YLLF), 118-138 (GAMI…WVVI), 144-164 (ISSL…FIFN), and 167-187 (LEIH…YKHL).

The protein belongs to the PlsY family. In terms of assembly, probably interacts with PlsX.

The protein resides in the cell inner membrane. It carries out the reaction an acyl phosphate + sn-glycerol 3-phosphate = a 1-acyl-sn-glycero-3-phosphate + phosphate. It participates in lipid metabolism; phospholipid metabolism. Catalyzes the transfer of an acyl group from acyl-phosphate (acyl-PO(4)) to glycerol-3-phosphate (G3P) to form lysophosphatidic acid (LPA). This enzyme utilizes acyl-phosphate as fatty acyl donor, but not acyl-CoA or acyl-ACP. This is Glycerol-3-phosphate acyltransferase from Campylobacter jejuni (strain RM1221).